Reading from the N-terminus, the 58-residue chain is UPF0434 protein Sfri_2386 (58 aa).

This sequence belongs to the UPF0434 family.

In Shewanella frigidimarina (strain NCIMB 400), this protein is UPF0434 protein Sfri_2386.